The following is a 112-amino-acid chain: UPF0342 protein SSU05_1260 (112 aa).

It belongs to the UPF0342 family.

In Streptococcus suis (strain 05ZYH33), this protein is UPF0342 protein SSU05_1260.